Here is a 225-residue protein sequence, read N- to C-terminus: Ras-related protein Rab-21 (225 aa).

A2 carries the post-translational modification N-acetylalanine. G28, G31, K32, T33, S34, N45, D46, H48, T50, and T51 together coordinate GTP. T33 provides a ligand contact to Mg(2+). Positions 43 to 56 (KFNDKHITTLQASF) match the Switch 1 motif. Mg(2+)-binding residues include T51 and D74. The Switch 2 signature appears at 76–94 (AGQERFHALGPIYYRDSNG). The GTP site is built by G77, N132, K133, D135, A163, and K164. The tract at residues 188-225 (ERAKGNGSSQPGTARRGVQIIDDEPQAQTSGGGCCSSG) is disordered. Residues C221 and C222 are each lipidated (S-geranylgeranyl cysteine). C222 is modified (cysteine methyl ester). The propeptide at 223–225 (SSG) is removed in mature form.

The protein belongs to the small GTPase superfamily. Rab family. In terms of assembly, interacts with the cytoplasmic tail of integrins ITGA1, ITGA2, ITGA5, ITGA6, ITGA11 and ITGB1. Interacts with RABGEF1 (via VPS9 domain). Interacts with ANKRD27. Interacts with VAMP7. Interacts (in GTP-bound form) with VAMP8 in response to starvation; the interaction probably regulates VAMP8 endolysosomal trafficking. Interacts (active GTP-bound form) with TMED10; the interaction is indirect and regulates TMED10 abundance and localization at the Golgi. It depends on Mg(2+) as a cofactor. As to expression, widely expressed. In jejunal tissue, predominantly expressed in the apical region of the epithelial cell layer of the villi, weak expression, if any, in the crypt epithelium. Capillary endothelium and some cell types in the lamina propria also show expression.

Its subcellular location is the endoplasmic reticulum membrane. It localises to the golgi apparatus. The protein resides in the trans-Golgi network. It is found in the golgi apparatus membrane. The protein localises to the early endosome membrane. Its subcellular location is the cytoplasmic vesicle membrane. It localises to the cleavage furrow. The protein resides in the cell projection. It is found in the neuron projection. It carries out the reaction GTP + H2O = GDP + phosphate + H(+). Regulated by guanine nucleotide exchange factors (GEFs) including ANKRD27 and RABGEF1, which promote the exchange of bound GDP for free GTP. Regulated by GTPase activating proteins (GAPs) which increase the GTP hydrolysis activity. Inhibited by GDP dissociation inhibitors (GDIs). The small GTPases Rab are key regulators of intracellular membrane trafficking, from the formation of transport vesicles to their fusion with membranes. Rabs cycle between an inactive GDP-bound form and an active GTP-bound form that is able to recruit to membranes different sets of downstream effectors directly responsible for vesicle formation, movement, tethering and fusion. RAB21 is involved in membrane trafficking control. During the mitosis of adherent cells, controls the endosomal trafficking of integrins which is required for the successful completion of cytokinesis. Regulates integrin internalization and recycling, but does not influence the traffic of endosomally translocated receptors in general. As a result, may regulate cell adhesion and migration. Involved in neurite growth. Following SBF2/MTMT13-mediated activation in response to starvation-induced autophagy, binds to and regulates SNARE protein VAMP8 endolysosomal transport required for SNARE-mediated autophagosome-lysosome fusion. Modulates protein levels of the cargo receptors TMED2 and TMED10, and required for appropriate Golgi localization of TMED10. This chain is Ras-related protein Rab-21, found in Homo sapiens (Human).